Consider the following 356-residue polypeptide: tRNA N6-adenosine threonylcarbamoyltransferase (356 aa).

Fe cation-binding residues include H110 and H114. Substrate contacts are provided by residues 132–136, D165, G178, D182, and N288; that span reads LVSGG. Residue D316 coordinates Fe cation.

It belongs to the KAE1 / TsaD family. Requires Fe(2+) as cofactor.

The protein resides in the cytoplasm. It catalyses the reaction L-threonylcarbamoyladenylate + adenosine(37) in tRNA = N(6)-L-threonylcarbamoyladenosine(37) in tRNA + AMP + H(+). Its function is as follows. Required for the formation of a threonylcarbamoyl group on adenosine at position 37 (t(6)A37) in tRNAs that read codons beginning with adenine. Is involved in the transfer of the threonylcarbamoyl moiety of threonylcarbamoyl-AMP (TC-AMP) to the N6 group of A37, together with TsaE and TsaB. TsaD likely plays a direct catalytic role in this reaction. The sequence is that of tRNA N6-adenosine threonylcarbamoyltransferase from Maridesulfovibrio salexigens (strain ATCC 14822 / DSM 2638 / NCIMB 8403 / VKM B-1763) (Desulfovibrio salexigens).